The chain runs to 431 residues: Putative helicase 055L (431 aa).

Positions 73-222 (WGHVTSKGYC…ALGAFFGRED (150 aa)) constitute a Helicase ATP-binding domain. 86–93 (CPPGFGKT) lines the ATP pocket. The DEAH box signature appears at 175-178 (DEAH). The interval 403–431 (KCDASRPSQSTPTPTGSSQPAPRTRRPQR) is disordered. The segment covering 407–424 (SRPSQSTPTPTGSSQPAP) has biased composition (low complexity).

In Frog virus 3 (isolate Goorha) (FV-3), this protein is Putative helicase 055L.